Reading from the N-terminus, the 485-residue chain is Expansin-like protein 8 (485 aa).

The N-terminal stretch at 1 to 21 (MRISIILLSLLFLSLHSLIKA) is a signal peptide. The Extracellular segment spans residues 22–464 (DITKLSVCGS…QSGHHASSNT (443 aa)). In terms of domain architecture, Expansin-like EG45 spans 26–139 (LSVCGSARAV…QIVSCGYSGN (114 aa)). Disulfide bonds link C29–C70 and C73–C134. Residues N117 and N365 are each glycosylated (N-linked (GlcNAc...) asparagine). Residues 408–436 (EVNNKPSTTSGTGTTSSKPSSSSGGVSGG) are disordered. A compositionally biased stretch (low complexity) spans 414 to 431 (STTSGTGTTSSKPSSSSG). N-linked (GlcNAc...) asparagine glycosylation is present at N454. Residues 465–485 (NILLPTTFVFFISITILSLLF) traverse the membrane as a helical segment.

The protein belongs to the expansin family. Expansin A subfamily.

It localises to the membrane. Its function is as follows. May serve to lubricate the movement of the cellulose microfibrils during cell growth and wall extension and/or may serve to maintain the fluid state of the slug cell wall. In Dictyostelium discoideum (Social amoeba), this protein is Expansin-like protein 8 (expl8).